The chain runs to 338 residues: Galactinol synthase 2 (338 aa).

Lys105 is an active-site residue. Mn(2+) is bound by residues Asp121, Asp123, and His258.

Belongs to the glycosyltransferase 8 family. Galactosyltransferase subfamily. A divalent metal cation is required as a cofactor.

The protein localises to the cytoplasm. It carries out the reaction myo-inositol + UDP-alpha-D-galactose = alpha-D-galactosyl-(1-&gt;3)-1D-myo-inositol + UDP + H(+). Its function is as follows. Galactinol synthase involved in the biosynthesis of raffinose family oligosaccharides (RFOs) that function as osmoprotectants. May promote plant stress tolerance. The protein is Galactinol synthase 2 (GOLS2) of Solanum lycopersicum (Tomato).